Reading from the N-terminus, the 542-residue chain is Monocarboxylate transporter 3 (542 aa).

Residues 1-19 (MGRADPEEGQLPAPVKPPD) lie on the Cytoplasmic side of the membrane. A helical membrane pass occupies residues 20 to 40 (GGWGWIVLFGCFVITGFSYAF). Residues 41-63 (PKAVSVYFKELMKDFHVGYSDTA) are Extracellular-facing. A helical transmembrane segment spans residues 64–84 (WISSIMLAMLYGTGPVCSIMV). Topologically, residues 85 to 93 (NQFGCRPVM) are cytoplasmic. A helical membrane pass occupies residues 94–114 (LIGGLLASSGMILASFTTNII). At 115-119 (ELYLT) the chain is on the extracellular side. The helical transmembrane segment at 120–140 (AGVLTGLGMALNFQPSLIMLG) threads the bilayer. Topologically, residues 141 to 152 (TYFDKRRPLANG) are cytoplasmic. Residues 153–173 (LAAAGSPVFLSSLSPLGQVLL) form a helical membrane-spanning segment. Over 174 to 181 (EKFGWRGG) the chain is Extracellular. A helical membrane pass occupies residues 182-202 (FLIMGGLLLNCCTCGAVMRPL). The Cytoplasmic segment spans residues 203 to 265 (DAGMKRKTEK…LDFSIFSNRG (63 aa)). Positions 226–247 (GGKSEEGISTTDGTKKTKKAKK) are disordered. Residues 266–286 (FIIYTISKFILVLGLFVPPIL) form a helical membrane-spanning segment. Residues 287–301 (LVNYAKDTGVPDTEA) lie on the Extracellular side of the membrane. A helical transmembrane segment spans residues 302 to 322 (AFLLSIIGFIDIFARPACGMV). Residues 323 to 330 (AGLKWVRP) are Cytoplasmic-facing. The chain crosses the membrane as a helical span at residues 331–351 (HVAYLFSFAMLFNGLTDICSA). The Extracellular portion of the chain corresponds to 352-357 (RASNYT). A helical membrane pass occupies residues 358-378 (GLVIFCVFFGISYGMVGALQF). At 379 to 392 (EVLMAIVGSQKFSS) the chain is on the cytoplasmic side. Residues 393-413 (AIGLVLLIEAFAVLIGPPSAG) form a helical membrane-spanning segment. Residues 414-423 (RLVDALKNYE) lie on the Extracellular side of the membrane. The chain crosses the membrane as a helical span at residues 424–444 (VIFYLAGSEVVLSALFLAMAT). Topologically, residues 445–542 (YCCLNRGKKT…ADQTVERDSF (98 aa)) are cytoplasmic. Residues 453 to 542 (KTPPPEKNPS…ADQTVERDSF (90 aa)) form a disordered region. Basolateral sorting signal regions lie at residues 465 to 510 (GGSD…VEDE) and 511 to 532 (QSGE…AGCN). The span at 468 to 478 (DTEEAESDVQE) shows a compositional bias: acidic residues.

The protein belongs to the major facilitator superfamily. Monocarboxylate porter (TC 2.A.1.13) family. In terms of tissue distribution, retinal pigment epithelium.

It localises to the basolateral cell membrane. It catalyses the reaction (S)-lactate(in) + H(+)(in) = (S)-lactate(out) + H(+)(out). Probable retinal pigment epithelium (RPE)-specific proton-coupled L-lactate transporter. May facilitate transport of lactate and H(+) out of the retina and could therefore play a role in pH and ion homeostasis of the outer retina. This chain is Monocarboxylate transporter 3 (SLC16A8), found in Gallus gallus (Chicken).